The chain runs to 146 residues: UPF0178 protein BCA_3127 (146 aa).

It belongs to the UPF0178 family.

The chain is UPF0178 protein BCA_3127 from Bacillus cereus (strain 03BB102).